The sequence spans 258 residues: Imidazole glycerol phosphate synthase subunit HisF (258 aa).

Catalysis depends on residues D11 and D130.

It belongs to the HisA/HisF family. Heterodimer of HisH and HisF.

Its subcellular location is the cytoplasm. The catalysed reaction is 5-[(5-phospho-1-deoxy-D-ribulos-1-ylimino)methylamino]-1-(5-phospho-beta-D-ribosyl)imidazole-4-carboxamide + L-glutamine = D-erythro-1-(imidazol-4-yl)glycerol 3-phosphate + 5-amino-1-(5-phospho-beta-D-ribosyl)imidazole-4-carboxamide + L-glutamate + H(+). Its pathway is amino-acid biosynthesis; L-histidine biosynthesis; L-histidine from 5-phospho-alpha-D-ribose 1-diphosphate: step 5/9. IGPS catalyzes the conversion of PRFAR and glutamine to IGP, AICAR and glutamate. The HisF subunit catalyzes the cyclization activity that produces IGP and AICAR from PRFAR using the ammonia provided by the HisH subunit. In Shigella sonnei (strain Ss046), this protein is Imidazole glycerol phosphate synthase subunit HisF.